Here is a 402-residue protein sequence, read N- to C-terminus: L-threonine ammonia-lyase (402 aa).

K51 is modified (N6-(pyridoxal phosphate)lysine). Pyridoxal 5'-phosphate is bound by residues N78, 178–181, and S302; that span reads GGGL. An ACT domain is found at 327 to 402; the sequence is KLKVELDDLP…GVGYLVDVLK (76 aa).

This sequence belongs to the serine/threonine dehydratase family. Requires pyridoxal 5'-phosphate as cofactor.

The catalysed reaction is L-threonine = 2-oxobutanoate + NH4(+). It carries out the reaction L-serine = pyruvate + NH4(+). It participates in amino-acid biosynthesis; L-isoleucine biosynthesis; 2-oxobutanoate from L-threonine: step 1/1. In terms of biological role, catalyzes the conversion of threonine to 2-oxobutanoate and ammonia. Functions in the threonine-dependent pathway of isoleucine biosynthesis, which is the minor pathway for isoleucine biosynthesis in G.sulfurreducens. Also displays serine ammonia-lyase activity, yielding pyruvate from L-serine. In Geobacter sulfurreducens (strain ATCC 51573 / DSM 12127 / PCA), this protein is L-threonine ammonia-lyase.